A 732-amino-acid polypeptide reads, in one-letter code: Formin-homology and zinc finger domains protein 1 (732 aa).

4 stretches are compositionally biased toward low complexity: residues 1–12 (MMLASSAPTAPS), 19–45 (QPSA…SDAS), 121–137 (QQQQ…QSSS), and 240–251 (SSPKSPTSPTQP). The N-terminal stretch at 1–27 (MMLASSAPTAPSLLPPSSQPSAATTRA) is a signal peptide. Disordered regions lie at residues 1–45 (MMLA…SDAS), 121–141 (QQQQ…SDRK), and 232–267 (RGRP…RRNT). Positions 256–267 (SQASSLPSRRNT) are enriched in polar residues. Positions 355–732 (PISLSSSIIP…DDHHINVSSP (378 aa)) constitute an FH2 domain.

Belongs to the formin homology family. In terms of tissue distribution, transiently expressed in all mesoderm derived progenitor body wall muscle cells before they differentiate.

Its function is as follows. Acts redundantly with hlh-1 to promote body wall muscle cell and coelomocyte specification in postembryonic mesoderm progenitors, probably through suppression of sem-2. This is Formin-homology and zinc finger domains protein 1 from Caenorhabditis elegans.